Here is a 95-residue protein sequence, read N- to C-terminus: Co-chaperonin GroES (95 aa).

Belongs to the GroES chaperonin family. In terms of assembly, heptamer of 7 subunits arranged in a ring. Interacts with the chaperonin GroEL.

The protein localises to the cytoplasm. In terms of biological role, together with the chaperonin GroEL, plays an essential role in assisting protein folding. The GroEL-GroES system forms a nano-cage that allows encapsulation of the non-native substrate proteins and provides a physical environment optimized to promote and accelerate protein folding. GroES binds to the apical surface of the GroEL ring, thereby capping the opening of the GroEL channel. In Cereibacter sphaeroides (strain KD131 / KCTC 12085) (Rhodobacter sphaeroides), this protein is Co-chaperonin GroES.